Reading from the N-terminus, the 101-residue chain is YcgL domain-containing protein ABBFA_001807 (101 aa).

Residues 1-92 enclose the YcgL domain; the sequence is MHCDIYRSSK…PPEGLINPNA (92 aa).

This is YcgL domain-containing protein ABBFA_001807 from Acinetobacter baumannii (strain AB307-0294).